Here is a 212-residue protein sequence, read N- to C-terminus: Uracil phosphoribosyltransferase (212 aa).

5-phospho-alpha-D-ribose 1-diphosphate-binding positions include Arg-78, Arg-103, and 130-138 (DPMLATGGS). Uracil contacts are provided by residues Ile-193 and 198–200 (GDA). Asp-199 serves as a coordination point for 5-phospho-alpha-D-ribose 1-diphosphate.

This sequence belongs to the UPRTase family. Requires Mg(2+) as cofactor.

It carries out the reaction UMP + diphosphate = 5-phospho-alpha-D-ribose 1-diphosphate + uracil. The protein operates within pyrimidine metabolism; UMP biosynthesis via salvage pathway; UMP from uracil: step 1/1. Its activity is regulated as follows. Allosterically activated by GTP. In terms of biological role, catalyzes the conversion of uracil and 5-phospho-alpha-D-ribose 1-diphosphate (PRPP) to UMP and diphosphate. The chain is Uracil phosphoribosyltransferase from Bordetella petrii (strain ATCC BAA-461 / DSM 12804 / CCUG 43448).